The chain runs to 1187 residues: DNA-directed RNA polymerase subunit beta (1187 aa).

Residues 1150 to 1187 are disordered; sequence KDEDDDPASSADDLGFNIGARPDAAAKEDQKAEEPEYQ. Positions 1173–1187 are enriched in basic and acidic residues; sequence AAAKEDQKAEEPEYQ.

Belongs to the RNA polymerase beta chain family. In terms of assembly, the RNAP catalytic core consists of 2 alpha, 1 beta, 1 beta' and 1 omega subunit. When a sigma factor is associated with the core the holoenzyme is formed, which can initiate transcription.

The enzyme catalyses RNA(n) + a ribonucleoside 5'-triphosphate = RNA(n+1) + diphosphate. Functionally, DNA-dependent RNA polymerase catalyzes the transcription of DNA into RNA using the four ribonucleoside triphosphates as substrates. This Bifidobacterium longum (strain DJO10A) protein is DNA-directed RNA polymerase subunit beta.